A 130-amino-acid chain; its full sequence is Methylglyoxal synthase (130 aa).

The 130-residue stretch at 1–130 folds into the MGS-like domain; the sequence is MSKPRIALIA…DLARNMQDVC (130 aa). Residues H11, K15, 37-40, and 57-58 contribute to the substrate site; these read TGTT and SG. D63 serves as the catalytic Proton donor/acceptor. H90 is a binding site for substrate.

It belongs to the methylglyoxal synthase family.

It catalyses the reaction dihydroxyacetone phosphate = methylglyoxal + phosphate. Catalyzes the formation of methylglyoxal from dihydroxyacetone phosphate. The polypeptide is Methylglyoxal synthase (Burkholderia vietnamiensis (strain G4 / LMG 22486) (Burkholderia cepacia (strain R1808))).